Reading from the N-terminus, the 20-residue chain is Ribulose bisphosphate carboxylase small subunit (20 aa).

This sequence belongs to the RuBisCO small chain family. In terms of assembly, heterohexadecamer of 8 large and 8 small subunits.

It is found in the plastid. The protein resides in the chloroplast. Its function is as follows. RuBisCO catalyzes two reactions: the carboxylation of D-ribulose 1,5-bisphosphate, the primary event in carbon dioxide fixation, as well as the oxidative fragmentation of the pentose substrate in the photorespiration process. Both reactions occur simultaneously and in competition at the same active site. Although the small subunit is not catalytic it is essential for maximal activity. In Chattonella marina var. antiqua (Red tide flagellate), this protein is Ribulose bisphosphate carboxylase small subunit.